A 395-amino-acid polypeptide reads, in one-letter code: Oxalate oxidoreductase subunit alpha (395 aa).

In terms of assembly, dimer of heterotrimer of one alpha, one beta and one delta subunit.

It catalyses the reaction oxidized 2[4Fe-4S]-[ferredoxin] + oxalate = reduced 2[4Fe-4S]-[ferredoxin] + 2 CO2. Its function is as follows. Catalyzes the anaerobic oxidation of oxalate using a broad range of electron acceptors, including ferredoxin and the nickel-dependent carbon monoxide dehydrogenase. Does not require coenzyme A as cosubstrate. Enables anaerobic growth on oxalate which is used as energy source by the bacteria. The sequence is that of Oxalate oxidoreductase subunit alpha from Moorella thermoacetica (strain ATCC 39073 / JCM 9320).